Here is a 152-residue protein sequence, read N- to C-terminus: Endoribonuclease YbeY (152 aa).

Zn(2+) is bound by residues His-118, His-122, and His-128.

Belongs to the endoribonuclease YbeY family. Requires Zn(2+) as cofactor.

The protein localises to the cytoplasm. Functionally, single strand-specific metallo-endoribonuclease involved in late-stage 70S ribosome quality control and in maturation of the 3' terminus of the 16S rRNA. In Lacticaseibacillus casei (strain BL23) (Lactobacillus casei), this protein is Endoribonuclease YbeY.